The sequence spans 596 residues: F-box/WD repeat-containing protein 8 (596 aa).

Residue Met1 is modified to N-acetylmethionine. Residues 21-95 (QVLRRRRRLE…PDRDAAEPEP (75 aa)) are disordered. Basic and acidic residues predominate over residues 29-43 (LEAGERRPRRPEAGA). The span at 44-64 (RGEPASGYLGLAQGLLEGAGR) shows a compositional bias: low complexity. Positions 71–91 (GRTDRKDVSSRSRSPPDRDAA) are enriched in basic and acidic residues. Phosphoserine is present on residues Ser82 and Ser84. The 47-residue stretch at 111-157 (PFFDVHLPYELAINIFQYLNRRELGLCAQVSKTWKVIAEDEVLWYRL) folds into the F-box domain. WD repeat units lie at residues 199–248 (AVSE…LESE), 257–297 (QPYV…FEHD), 298–338 (ARIQ…SEFE), 339–381 (VQKL…LHYV), 382–427 (YGQP…SKLG), 428–473 (NALG…SAHQ), 474–511 (LGVS…EVHS), and 512–559 (RHPV…AYEF).

As to quaternary structure, component of the Cul7-RING(FBXW8) complex consisting of CUL7, RBX1, SKP1 and FBXW8; within the complex interacts with CUL7 and SKP1. Interacts with GLMN isoform 1. Interacts with OBSL1, CUL1, CUL2, CCT6B, PFDN5, CCT2, CCT3, CCT6A, CCT7, VBP1, CCDC8, ARF1, TRIP13, PDCD5 and GORASP1. Interacts with MAP4K1/HPK1 (when autophosphorylated). Associated component of the 3M complex. Interacts with POUF51 (when phosphorylated on 'Ser-347'). In terms of processing, phosphorylation at Ser-84 by mTORC2 promotes FBXW8 stabilization, allowing its translocation to the cytosol in response to insulin. Expressed in placenta and embryonic brain (at protein level).

The protein resides in the cytoplasm. Its subcellular location is the perinuclear region. It localises to the golgi apparatus. The protein localises to the cytosol. The protein operates within protein modification; protein ubiquitination. Its function is as follows. Substrate-recognition component of the Cul7-RING(FBXW8) ubiquitin ligase complex, which mediates the ubiquitination and subsequent proteasomal degradation of target proteins. The Cul7-RING(FBXW8) complex mediates ubiquitination and consequent degradation of GORASP1, acting as a component of the ubiquitin ligase pathway that regulates Golgi morphogenesis and dendrite patterning in brain. Mediates ubiquitination and degradation of IRS1 in a mTOR-dependent manner: the Cul7-RING(FBXW8) complex recognizes and binds IRS1 previously phosphorylated by S6 kinase (RPS6KB1 or RPS6KB2). The Cul7-RING(FBXW8) complex also mediates ubiquitination of MAP4K1/HPK1: recognizes and binds autophosphorylated MAP4K1/HPK1, leading to its degradation, thereby affecting cell proliferation and differentiation. The Cul7-RING(FBXW8) complex also mediates ubiquitination of phosphorylated cyclin-D1 (CCND1). The Cul7-RING(FBXW8) complex is however not a major regulator of CCND1 stability during the G1/S transition. Associated component of the 3M complex, suggesting that it mediates some of 3M complex functions. The chain is F-box/WD repeat-containing protein 8 (Fbxw8) from Rattus norvegicus (Rat).